Here is a 263-residue protein sequence, read N- to C-terminus: 4-hydroxy-tetrahydrodipicolinate reductase (263 aa).

NAD(+)-binding positions include 8 to 13, aspartate 34, 99 to 101, and 125 to 128; these read GACGRM, GTT, and SPNY. The active-site Proton donor/acceptor is the histidine 157. (S)-2,3,4,5-tetrahydrodipicolinate is bound at residue histidine 158. Catalysis depends on lysine 161, which acts as the Proton donor. Residue 167 to 168 participates in (S)-2,3,4,5-tetrahydrodipicolinate binding; that stretch reads GT.

The protein belongs to the DapB family.

It localises to the cytoplasm. The enzyme catalyses (S)-2,3,4,5-tetrahydrodipicolinate + NAD(+) + H2O = (2S,4S)-4-hydroxy-2,3,4,5-tetrahydrodipicolinate + NADH + H(+). It carries out the reaction (S)-2,3,4,5-tetrahydrodipicolinate + NADP(+) + H2O = (2S,4S)-4-hydroxy-2,3,4,5-tetrahydrodipicolinate + NADPH + H(+). It participates in amino-acid biosynthesis; L-lysine biosynthesis via DAP pathway; (S)-tetrahydrodipicolinate from L-aspartate: step 4/4. In terms of biological role, catalyzes the conversion of 4-hydroxy-tetrahydrodipicolinate (HTPA) to tetrahydrodipicolinate. In Methanosarcina mazei (strain ATCC BAA-159 / DSM 3647 / Goe1 / Go1 / JCM 11833 / OCM 88) (Methanosarcina frisia), this protein is 4-hydroxy-tetrahydrodipicolinate reductase.